We begin with the raw amino-acid sequence, 260 residues long: MIPPNASLVKYDNPVLVSRNTEKKTPRARALKTSPQQPTNAGPVPNPPPKGGSKLPPVESQKAQQTDEILNSILPPREWTESGQLWVQQVSSTPATRLDVVNLQEQLDMRLQQRQARETGICPVRRELYSQCFDELIRQVTIECAERGLLLLRVRDEIRMTIAAYQTLYESSVAFGMRKALQAEQGKSDMEKKITDLGQEKRELERQVNELKAKCEAIEKREAERRQVEEKKHAEEIQFLKRTNQQLKTQLEGIIAPNKK.

The interval 1–66 is disordered; the sequence is MIPPNASLVK…PVESQKAQQT (66 aa). A coiled-coil region spans residues 177–260; it reads MRKALQAEQG…LEGIIAPNKK (84 aa).

Belongs to the inner dynein arm light chain family. May undergo some post-translational modifications that shift its mobility on SDS gels.

Its function is as follows. May play a dynamic role in flagellar motility. The sequence is that of 33 kDa inner dynein arm light chain, axonemal from Strongylocentrotus purpuratus (Purple sea urchin).